A 6298-amino-acid chain; its full sequence is Adhesion G-protein coupled receptor V1 (6298 aa).

The N-terminal stretch at 1–28 is a signal peptide; sequence MSVTSEPGMISSFLLVYLSTLFISFVFG. 22 consecutive Calx-beta domains span residues 29 to 116, 132 to 236, 251 to 362, 389 to 489, 646 to 746, 764 to 862, 877 to 980, 994 to 1094, 1108 to 1208, 1440 to 1540, 1562 to 1662, 1706 to 1805, 1846 to 1948, 1962 to 2075, 2103 to 2202, 2218 to 2320, 2437 to 2537, 2576 to 2672, 2687 to 2786, 2810 to 2921, 2945 to 3044, and 3067 to 3167; these read EAEI…FHLT, ASVT…IQLR, VEII…IMLL, YGVL…LTIL, PAIA…TLSL, DLII…VILS, VNIT…IILL, ASLR…IVLF, ATVI…LRLV, AMPR…FLLK, QKSD…VTLV, TGLP…VELL, ILVT…VSIL, TLTI…IELF, HLVI…VQLL, VITI…VQLA, TLCL…FLIS, FIIY…VRLG, VTVN…VVLY, LTVE…VNLT, QIVI…LLLT, and DGPG…VCTL. The Extracellular portion of the chain corresponds to 29 to 5901; sequence EAEIRFTGQT…TDNSSSYNEA (5873 aa). 6 EAR repeats span residues 3251 to 3292, 3293 to 3341, 3344 to 3389, 3391 to 3435, 3437 to 3484, and 3488 to 3530; these read VFSI…RWQG, TFVP…MLTA, RLVL…RWNG, NFAW…TWSG, QFIN…VWEM, and SLRY…CWNS. Calx-beta domains are found at residues 3581-3622, 3636-3736, 3772-3872, 3919-4003, 4017-4120, 4135-4235, 4251-4351, 4384-4484, 4507-4607, 4628-4728, 4989-5089, 5281-5325, and 5361-5461; these read QSDF…RVQL, SVRV…VVTL, GAVR…VTIA, GGVI…ISLV, VNVV…IELT, SVII…EFQL, ARIT…LAIT, RIII…ILLI, SPFG…IVQL, KFGD…AVQL, TTAE…INLT, AVEE…YVFL, and IGFS…FVEL. The region spanning 5740–5896 is the GAIN-B domain; the sequence is SILALHWNPQ…AVYAQTDNSS (157 aa). Disulfide bonds link Cys-5849-Cys-5878 and Cys-5866-Cys-5880. The segment at 5849-5896 is GPS; it reads CLLWNQAAASWLSDSQFCKVVEDASDYVECACSHMSVYAVYAQTDNSS. The helical transmembrane segment at 5902–5922 threads the bilayer; that stretch reads FFSAGLICISGLCLAVVSHMF. Residues 5923-5932 lie on the Cytoplasmic side of the membrane; it reads CARHSMFAAK. The helical transmembrane segment at 5933–5953 threads the bilayer; the sequence is LLTHMMVASLGTQILFLASAY. Topologically, residues 5954-5973 are extracellular; sequence ASPHLSEESCSAVAAVAHYL. The chain crosses the membrane as a helical span at residues 5974-5994; sequence YLCQFSWMLIQSVNFWYVLVV. Residues 5995–6003 lie on the Cytoplasmic side of the membrane; that stretch reads SDEHTERRC. Residues 6004-6024 form a helical membrane-spanning segment; sequence LLFCLLSWGLPSFVVILLILI. Topologically, residues 6025–6052 are extracellular; the sequence is LRGIYHRSMPQIYGLIHGDLCFIPNIYA. Residues 6053–6073 traverse the membrane as a helical segment; the sequence is ALFTAALVPLMCLVVVFVVFI. Residues 6074–6097 are Cytoplasmic-facing; that stretch reads HAYQLKPQWKGYDDVFRGRTNAAE. A helical transmembrane segment spans residues 6098–6118; the sequence is IPLILYLFALISMTWLWGGLH. At 6119–6126 the chain is on the extracellular side; sequence MAYGHFWM. The chain crosses the membrane as a helical span at residues 6127-6147; sequence LVLFVIFNSLQGLYVFVVYFI. Residues 6148–6298 are Cytoplasmic-facing; the sequence is LHNQTCCPMK…RRIPIADTHL (151 aa). 2 disordered regions span residues 6206–6242 and 6264–6283; these read ERSS…GSLI and SVSD…LTDS. Composition is skewed to polar residues over residues 6208–6226 and 6265–6283; these read SSFQ…SPQN and VSDN…LTDS.

Belongs to the G-protein coupled receptor 2 family. Adhesion G-protein coupled receptor (ADGR) subfamily. Forms a heterodimer, consisting of a large extracellular region (alpha subunit) non-covalently linked to a seven-transmembrane moiety (beta subunit). Interacts (via the cytoplasmic region) with PDZD7. Component of USH2 complex, composed of ADGRV1, PDZD7, USH2A and WHRN. Interacts with USH2A and WHRN. Interacts (via the cytoplasmic region) with MYO7A (via MyTH4-FERM domains). In terms of processing, autoproteolytically cleaved into 2 subunits, an extracellular alpha subunit and a seven-transmembrane subunit. In terms of tissue distribution, expressed by oligodendrocytes. In midbrain, enriched in the myelinated regions of the superior and inferior colliculi. In the cochlea, expressed in developing hair cells. Expressed by photoreceptors in the retina.

The protein localises to the cell membrane. Its subcellular location is the cell projection. The protein resides in the stereocilium membrane. It is found in the photoreceptor inner segment. It localises to the secreted. G-protein coupled receptor which has an essential role in the development of hearing and vision. Couples to G-alpha(i)-proteins, GNAI1/2/3, G-alpha(q)-proteins, GNAQ, as well as G-alpha(s)-proteins, GNAS, inhibiting adenylate cyclase (AC) activity and cAMP production. Required for the hair bundle ankle formation, which connects growing stereocilia in developing cochlear hair cells of the inner ear. In response to extracellular calcium, activates kinases PKA and PKC to regulate myelination by inhibiting the ubiquitination of MAG, thus enhancing the stability of this protein in myelin-forming cells of the auditory pathway. In retina photoreceptors, the USH2 complex is required for the maintenance of periciliary membrane complex that seems to play a role in regulating intracellular protein transport. Involved in the regulation of bone metabolism. Its function is as follows. Cleaved ADGRV1 beta-subunit couples with G-alpha(i)-proteins, GNAI1/2/3, and constitutively inhibits adenylate cyclase (AC) activity with a stronger effect than full ADGRV1. The sequence is that of Adhesion G-protein coupled receptor V1 from Mus musculus (Mouse).